Reading from the N-terminus, the 120-residue chain is NAD(P)H-quinone oxidoreductase subunit 3, chloroplastic (120 aa).

A run of 3 helical transmembrane segments spans residues 9–29, 64–84, and 88–108; these read IFWAFLIISSLIPILAFLISG, MFALVFVVFDVETVFLYPWAM, and VLGVSVFIEALIFVLIPIIGS.

It belongs to the complex I subunit 3 family. In terms of assembly, NDH is composed of at least 16 different subunits, 5 of which are encoded in the nucleus.

The protein resides in the plastid. It is found in the chloroplast thylakoid membrane. The catalysed reaction is a plastoquinone + NADH + (n+1) H(+)(in) = a plastoquinol + NAD(+) + n H(+)(out). It catalyses the reaction a plastoquinone + NADPH + (n+1) H(+)(in) = a plastoquinol + NADP(+) + n H(+)(out). Its function is as follows. NDH shuttles electrons from NAD(P)H:plastoquinone, via FMN and iron-sulfur (Fe-S) centers, to quinones in the photosynthetic chain and possibly in a chloroplast respiratory chain. The immediate electron acceptor for the enzyme in this species is believed to be plastoquinone. Couples the redox reaction to proton translocation, and thus conserves the redox energy in a proton gradient. The polypeptide is NAD(P)H-quinone oxidoreductase subunit 3, chloroplastic (Drimys granadensis).